Reading from the N-terminus, the 269-residue chain is Staphylococcal secretory antigen ssaA2 (269 aa).

An N-terminal signal peptide occupies residues 1–27 (MKKIATATIATAGFATIAIASGNQAHA). A run of 7 repeats spans residues 83 to 85 (YNN), 88 to 90 (YNN), 91 to 93 (YNN), 97 to 99 (YNN), 103 to 105 (YNN), 106 to 108 (YSN), and 115 to 117 (YNN). The tract at residues 83 to 115 (YNNYNYNNYNNGYSYNNYSRYNNYSNNNQSYNY) is 7 X 3 AA repeats of Y-[NS]-N. In terms of domain architecture, Peptidase C51 spans 148 to 269 (MAPSSNGRSI…SQAAGYNFIH (122 aa)).

Its subcellular location is the secreted. Its function is as follows. Not known; immunogenic protein. The chain is Staphylococcal secretory antigen ssaA2 (ssaA2) from Staphylococcus aureus (strain MSSA476).